A 35-amino-acid chain; its full sequence is Photosystem II reaction center protein Y (35 aa).

Residues 1 to 4 (MDTR) are Lumenal-facing. The helical transmembrane segment at 5 to 23 (LLVVLLPVATAAAWALFNI) threads the bilayer. The Stromal segment spans residues 24–35 (GRLALQQLKRMS).

The protein belongs to the PsbY family. As to quaternary structure, PSII is composed of 1 copy each of membrane proteins PsbA, PsbB, PsbC, PsbD, PsbE, PsbF, PsbH, PsbI, PsbJ, PsbK, PsbL, PsbM, PsbT, PsbX, PsbY, PsbZ, Psb30/Ycf12, at least 3 peripheral proteins of the oxygen-evolving complex and a large number of cofactors. It forms dimeric complexes.

It is found in the plastid. It localises to the chloroplast thylakoid membrane. In terms of biological role, loosely associated component of the core of photosystem II (PSII), it is not always seen in crystals. PSII is a light-driven water plastoquinone oxidoreductase, using light energy to abstract electrons from H(2)O, generating a proton gradient subsequently used for ATP formation. This chain is Photosystem II reaction center protein Y, found in Emiliania huxleyi (Coccolithophore).